Consider the following 488-residue polypeptide: Glutamyl-tRNA(Gln) amidotransferase subunit A (488 aa).

Residues K77 and S152 each act as charge relay system in the active site. S176 functions as the Acyl-ester intermediate in the catalytic mechanism.

The protein belongs to the amidase family. GatA subfamily. Heterotrimer of A, B and C subunits.

It catalyses the reaction L-glutamyl-tRNA(Gln) + L-glutamine + ATP + H2O = L-glutaminyl-tRNA(Gln) + L-glutamate + ADP + phosphate + H(+). Allows the formation of correctly charged Gln-tRNA(Gln) through the transamidation of misacylated Glu-tRNA(Gln) in organisms which lack glutaminyl-tRNA synthetase. The reaction takes place in the presence of glutamine and ATP through an activated gamma-phospho-Glu-tRNA(Gln). The sequence is that of Glutamyl-tRNA(Gln) amidotransferase subunit A from Streptococcus agalactiae serotype Ia (strain ATCC 27591 / A909 / CDC SS700).